The chain runs to 164 residues: Putative histone H2B type 2-D (164 aa).

The span at 1-12 (MPEPAKFAPAPK) shows a compositional bias: low complexity. Residues 1–33 (MPEPAKFAPAPKKGSKKAVTKAQKKDGKKRKRS) are disordered. Pro2 carries the N-acetylproline modification. Lys6 is subject to N6-(2-hydroxyisobutyryl)lysine; alternate. An N6-(beta-hydroxybutyryl)lysine; alternate mark is found at Lys6 and Lys12. N6-acetyllysine; alternate is present on residues Lys6, Lys12, and Lys13. Position 6 is an N6-butyryllysine; alternate (Lys6). Residues Lys6, Lys12, and Lys13 each carry the N6-crotonyllysine; alternate modification. 2 positions are modified to N6-lactoyllysine; alternate: Lys6 and Lys12. Residue Lys6 forms a Glycyl lysine isopeptide (Lys-Gly) (interchain with G-Cter in SUMO2); alternate linkage. The residue at position 13 (Lys13) is an N6-(2-hydroxyisobutyryl)lysine; alternate. Ser15 is subject to Phosphoserine; by STK4/MST1. N6-acetyllysine; alternate occurs at positions 16, 17, 21, and 24. N6-crotonyllysine; alternate occurs at positions 16, 17, 21, and 24. Lys16, Lys17, Lys21, and Lys24 each carry N6-lactoyllysine; alternate. N6-(beta-hydroxybutyryl)lysine; alternate occurs at positions 17 and 21. The residue at position 17 (Lys17) is an N6-glutaryllysine; alternate. N6-(2-hydroxyisobutyryl)lysine; alternate is present on residues Lys21 and Lys24. At Lys21 the chain carries N6-butyryllysine; alternate. A Glycyl lysine isopeptide (Lys-Gly) (interchain with G-Cter in SUMO2); alternate cross-link involves residue Lys21. Residue Lys25 is modified to N6-(2-hydroxyisobutyryl)lysine. N6-(2-hydroxyisobutyryl)lysine; alternate is present on Lys35. Lys35 carries the post-translational modification N6-(beta-hydroxybutyryl)lysine; alternate. Lys35 is subject to N6-crotonyllysine; alternate. Position 35 is an N6-glutaryllysine; alternate (Lys35). Lys35 is subject to N6-succinyllysine; alternate. Lys35 participates in a covalent cross-link: Glycyl lysine isopeptide (Lys-Gly) (interchain with G-Cter in ubiquitin); alternate. Ser37 carries the phosphoserine; by AMPK modification. An N6-(2-hydroxyisobutyryl)lysine; alternate mark is found at Lys44, Lys47, and Lys58. N6-lactoyllysine; alternate is present on Lys44. N6-glutaryllysine; alternate is present on residues Lys44 and Lys47. Lys47 carries the N6-methyllysine; alternate modification. The residue at position 58 (Lys58) is an N6,N6-dimethyllysine; alternate. Arg80 bears the Dimethylated arginine mark. Lys86 is subject to N6-(2-hydroxyisobutyryl)lysine; alternate. N6-(beta-hydroxybutyryl)lysine; alternate is present on Lys86. Residue Lys86 is modified to N6-acetyllysine; alternate. The residue at position 86 (Lys86) is an N6-lactoyllysine; alternate. The residue at position 86 (Lys86) is an N6,N6,N6-trimethyllysine; alternate. Omega-N-methylarginine is present on residues Arg87 and Arg93. The interval 111 to 140 (PCPRAPRRSPSTPAPSESLPGPGARSLPPS) is disordered.

Belongs to the histone H2B family. As to quaternary structure, the nucleosome is a histone octamer containing two molecules each of H2A, H2B, H3 and H4 assembled in one H3-H4 heterotetramer and two H2A-H2B heterodimers. The octamer wraps approximately 147 bp of DNA. Phosphorylation at Ser-37 (H2BS36ph) by AMPK in response to stress promotes transcription. Phosphorylated on Ser-15 (H2BS14ph) by STK4/MST1 during apoptosis; which facilitates apoptotic chromatin condensation. Also phosphorylated on Ser-15 in response to DNA double strand breaks (DSBs), and in correlation with somatic hypermutation and immunoglobulin class-switch recombination. Post-translationally, crotonylation (Kcr) is specifically present in male germ cells and marks testis-specific genes in post-meiotic cells, including X-linked genes that escape sex chromosome inactivation in haploid cells. Crotonylation marks active promoters and enhancers and confers resistance to transcriptional repressors. It is also associated with post-meiotically activated genes on autosomes. In terms of processing, lactylated in macrophages by EP300/P300 by using lactoyl-CoA directly derived from endogenous or exogenous lactate, leading to stimulates gene transcription.

It is found in the nucleus. The protein localises to the chromosome. In terms of biological role, core component of nucleosome. Nucleosomes wrap and compact DNA into chromatin, limiting DNA accessibility to the cellular machineries which require DNA as a template. Histones thereby play a central role in transcription regulation, DNA repair, DNA replication and chromosomal stability. DNA accessibility is regulated via a complex set of post-translational modifications of histones, also called histone code, and nucleosome remodeling. The polypeptide is Putative histone H2B type 2-D (Homo sapiens (Human)).